Here is a 254-residue protein sequence, read N- to C-terminus: MRIDVLSLFPDMFSGPMHDSIVGKAIENGHLTMPVTNFRDYSTNKHGNVDDYPFGGGAGMLLQPQPIFDALKATEEQAAAEGLPKGRVILLDPAGVTFNQHVAEDFAHEEHLTFLCGHYEGYDERIRTLVTDEVSLGDFVLTGGELASMVMIDATVRLLPGVLGNAESAPGDSFSSGLLEYPQYTRPADFRGMTVPDVLISGNHGKIEKWRQKEALRRTYQRRPDLIDHDQLTAEQKRLLADVRIEEEERASRN.

Residues Gly-117 and 136–141 (LGDFVL) each bind S-adenosyl-L-methionine.

It belongs to the RNA methyltransferase TrmD family. As to quaternary structure, homodimer.

The protein resides in the cytoplasm. It catalyses the reaction guanosine(37) in tRNA + S-adenosyl-L-methionine = N(1)-methylguanosine(37) in tRNA + S-adenosyl-L-homocysteine + H(+). Functionally, specifically methylates guanosine-37 in various tRNAs. The polypeptide is tRNA (guanine-N(1)-)-methyltransferase (Levilactobacillus brevis (strain ATCC 367 / BCRC 12310 / CIP 105137 / JCM 1170 / LMG 11437 / NCIMB 947 / NCTC 947) (Lactobacillus brevis)).